A 590-amino-acid chain; its full sequence is Protein O-linked-mannose beta-1,4-N-acetylglucosaminyltransferase 2 (590 aa).

At Met1 to Gly4 the chain is on the cytoplasmic side. A helical; Signal-anchor for type II membrane protein membrane pass occupies residues Thr5–Leu25. At Ser26 to Thr590 the chain is on the lumenal side. Residues Asn98, Asn275, and Asn553 are each glycosylated (N-linked (GlcNAc...) asparagine). The region spanning Arg494–Thr590 is the Fibronectin type-III domain.

Belongs to the glycosyltransferase 61 family.

It localises to the endoplasmic reticulum membrane. The enzyme catalyses 3-O-(alpha-D-mannosyl)-L-threonyl-[protein] + UDP-N-acetyl-alpha-D-glucosamine = 3-O-(N-acetyl-beta-D-glucosaminyl-(1-&gt;4)-alpha-D-mannosyl)-L-threonyl-[protein] + UDP + H(+). The protein operates within protein modification; protein glycosylation. In terms of biological role, O-linked mannose beta-1,4-N-acetylglucosaminyltransferase that transfers UDP-N-acetyl-D-glucosamine to the 4-position of the mannose to generate N-acetyl-D-glucosamine-beta-1,4-O-D-mannosylprotein. Involved in the biosynthesis of the phosphorylated O-mannosyl trisaccharide (N-acetylgalactosamine-beta-3-N-acetylglucosamine-beta-4-(phosphate-6-)mannose), a carbohydrate structure present in alpha-dystroglycan (DAG1), which is required for binding laminin G-like domain-containing extracellular proteins with high affinity. This chain is Protein O-linked-mannose beta-1,4-N-acetylglucosaminyltransferase 2 (pomgnt2), found in Takifugu rubripes (Japanese pufferfish).